The following is a 403-amino-acid chain: Ribonuclease T2-like (403 aa).

A signal peptide spans 1–19 (MLALILTISICIFLKGSTC). Intrachain disulfides connect Cys36–Cys55, Cys44–Cys91, Cys54–Cys158, and Cys99–Cys150. Residue Asn78 is glycosylated (N-linked (GlcNAc...) asparagine). Active-site residues include His84, Glu143, and His147. Residue Asn175 is glycosylated (N-linked (GlcNAc...) asparagine). The cysteines at positions 224 and 259 are disulfide-linked. Residues 268–288 (PKNGFNPGPQPPKSPRKGYLE) form a disordered region.

The protein belongs to the RNase T2 family.

The protein localises to the vacuole lumen. The protein resides in the cytoplasm. It catalyses the reaction a ribonucleotidyl-ribonucleotide-RNA + H2O = a 3'-end 3'-phospho-ribonucleotide-RNA + a 5'-end dephospho-ribonucleoside-RNA + H(+). Rnase which modulates cell survival under stress conditions. Released from the vacuole to the cytoplasm during stress to promote tRNA and rRNA cleavage and to activate separately a downstream pathway that promotes cell death. Involved in cell size, vacuolar morphology and growth at high temperatures and high salt concentration. This chain is Ribonuclease T2-like (RNY1), found in Debaryomyces hansenii (strain ATCC 36239 / CBS 767 / BCRC 21394 / JCM 1990 / NBRC 0083 / IGC 2968) (Yeast).